Reading from the N-terminus, the 177-residue chain is Transcription antitermination protein NusB (177 aa).

The disordered stretch occupies residues 1–36; the sequence is MTEQPTKPTGSRPPRQPRTGLTSTGARKAGSKSDRS.

It belongs to the NusB family.

Its function is as follows. Involved in transcription antitermination. Required for transcription of ribosomal RNA (rRNA) genes. Binds specifically to the boxA antiterminator sequence of the ribosomal RNA (rrn) operons. The chain is Transcription antitermination protein NusB from Albidiferax ferrireducens (strain ATCC BAA-621 / DSM 15236 / T118) (Rhodoferax ferrireducens).